The sequence spans 434 residues: Histidinol dehydrogenase (434 aa).

3 residues coordinate NAD(+): Tyr-130, Gln-192, and Asn-215. Residues Ser-238, Gln-260, and His-263 each coordinate substrate. Gln-260 and His-263 together coordinate Zn(2+). Catalysis depends on proton acceptor residues Glu-328 and His-329. Residues His-329, Asp-362, Glu-416, and His-421 each contribute to the substrate site. Residue Asp-362 participates in Zn(2+) binding. His-421 contributes to the Zn(2+) binding site.

Belongs to the histidinol dehydrogenase family. Zn(2+) serves as cofactor.

The catalysed reaction is L-histidinol + 2 NAD(+) + H2O = L-histidine + 2 NADH + 3 H(+). It functions in the pathway amino-acid biosynthesis; L-histidine biosynthesis; L-histidine from 5-phospho-alpha-D-ribose 1-diphosphate: step 9/9. Functionally, catalyzes the sequential NAD-dependent oxidations of L-histidinol to L-histidinaldehyde and then to L-histidine. The protein is Histidinol dehydrogenase of Synechococcus sp. (strain ATCC 27144 / PCC 6301 / SAUG 1402/1) (Anacystis nidulans).